Reading from the N-terminus, the 277-residue chain is Bis(5'-nucleosyl)-tetraphosphatase, symmetrical (277 aa).

The protein belongs to the Ap4A hydrolase family.

It carries out the reaction P(1),P(4)-bis(5'-adenosyl) tetraphosphate + H2O = 2 ADP + 2 H(+). Hydrolyzes diadenosine 5',5'''-P1,P4-tetraphosphate to yield ADP. This is Bis(5'-nucleosyl)-tetraphosphatase, symmetrical from Methylobacillus flagellatus (strain ATCC 51484 / DSM 6875 / VKM B-1610 / KT).